The sequence spans 172 residues: uncharacterized protein (172 aa).

The next 4 membrane-spanning stretches (helical) occupy residues 20-40 (LVLI…EYIF), 48-68 (CVYE…ALII), 76-96 (LILI…HSFV), and 146-166 (MTEY…LILF).

The protein resides in the cell membrane. This is an uncharacterized protein from Rickettsia prowazekii (strain Madrid E).